Consider the following 190-residue polypeptide: Scytalone dehydratase-like protein Arp1 (190 aa).

Position 67 (tyrosine 67) interacts with substrate. Catalysis depends on residues histidine 102 and histidine 127. Asparagine 148 is a substrate binding site.

It belongs to the scytalone dehydratase family. In terms of assembly, homotrimer. Each subunit contains an active site, located in the central part of the hydrophobic core of the monomer, which functions independently.

Scytalone dehydratase-like protein; part of the Pks2 gene cluster that mediates the formation of infectious structures (appressoria), enabling these fungi to kill insects faster. The product of the Pks2 gene cluster is different from the one of Pks1 and has still not been identified. This Metarhizium anisopliae (strain ARSEF 549) protein is Scytalone dehydratase-like protein Arp1.